An 87-amino-acid polypeptide reads, in one-letter code: Acyl-CoA-binding protein (87 aa).

Residues 2–87 (VSQLFEEKAK…VDQLIAKYSS (86 aa)) enclose the ACB domain. An acyl-CoA is bound by residues 29 to 33 (YALYK), lysine 51, and lysine 55. Lysine 51 participates in a covalent cross-link: Glycyl lysine isopeptide (Lys-Gly) (interchain with G-Cter in ubiquitin). Residue lysine 72 forms a Glycyl lysine isopeptide (Lys-Gly) (interchain with G-Cter in ubiquitin) linkage. Tyrosine 74 lines the an acyl-CoA pocket.

This sequence belongs to the ACBP family.

Its function is as follows. Binds medium- and long-chain acyl-CoA esters with very high affinity and may function as an intracellular carrier of acyl-CoA esters. Enhances the in vitro activity of the ceramide synthase complex. This chain is Acyl-CoA-binding protein (ACB1), found in Saccharomyces cerevisiae (strain ATCC 204508 / S288c) (Baker's yeast).